Consider the following 228-residue polypeptide: Vesicle transport protein SEC20 (228 aa).

The Cytoplasmic portion of the chain corresponds to 1–199; sequence MAAPQDVHVR…LITKYNRREL (199 aa). Positions 37–90 form a coiled coil; sequence LSELTELNTKVKEKFQQLKHRIQELEQSAKEQDKESEKQLLLQEVENHKKQMLS. A helical; Anchor for type IV membrane protein transmembrane segment spans residues 200–220; the sequence is TDKLLIFLALALFLATVLYIV. The Lumenal segment spans residues 221–228; the sequence is KKRLFPFL.

It belongs to the SEC20 family. Component of a SNARE complex consisting of STX18, USE1L, BNIP1/SEC20L and SEC22B. Interacts directly with STX18, RINT1/TIP20L and NAPA. Interacts with ZW10 through RINT1. Interacts with BCL2. Interacts with RNF186. Interacts with RNF185. Interacts with SQSTM1; increased by 'Lys-63'-linked polyubiquitination of BNIP1. Post-translationally, polyubiquitinated. 'Lys-63'-linked polyubiquitination by RNF185 increases the interaction with the autophagy receptor SQSTM1. Undergoes 'Lys-29'- and 'Lys-63'-linked polyubiquitination by RNF186 that may regulate BNIP1 localization to the mitochondrion.

Its subcellular location is the endoplasmic reticulum membrane. It is found in the mitochondrion membrane. As part of a SNARE complex may be involved in endoplasmic reticulum membranes fusion and be required for the maintenance of endoplasmic reticulum organization. Also plays a role in apoptosis. It is for instance required for endoplasmic reticulum stress-induced apoptosis. As a substrate of RNF185 interacting with SQSTM1, might also be involved in mitochondrial autophagy. The sequence is that of Vesicle transport protein SEC20 from Rattus norvegicus (Rat).